Here is a 350-residue protein sequence, read N- to C-terminus: Enoyl-[acyl-carrier-protein] reductase, mitochondrial (350 aa).

A mitochondrion-targeting transit peptide spans 1-12; sequence MWLGLRLFHRPF. The active-site Proton donor is tyrosine 68. NADP(+) contacts are provided by residues asparagine 141, 167–170, 190–192, 259–262, 284–286, and lysine 345; these read NSGV, RDR, YGGM, and FWV.

It belongs to the zinc-containing alcohol dehydrogenase family. Quinone oxidoreductase subfamily. As to quaternary structure, homodimer. As to expression, expressed in the developing pronephros.

The protein localises to the mitochondrion. The enzyme catalyses a 2,3-saturated acyl-[ACP] + NADP(+) = a (2E)-enoyl-[ACP] + NADPH + H(+). In terms of biological role, catalyzes the NADPH-dependent reduction of trans-2-enoyl thioesters in mitochondrial fatty acid synthesis (fatty acid synthesis type II). Fatty acid chain elongation in mitochondria uses acyl carrier protein (ACP) as an acyl group carrier, but the enzyme accepts both ACP and CoA thioesters as substrates in vitro. May provide the octanoyl chain used for lipoic acid biosynthesis, regulating protein lipoylation and mitochondrial respiratory activity. Involved in iron homeostasis; affecting Fe-S cluster assembly and ceramide metabolism. Required for proper morphology and bioenergetic functions of mitochondria. Required for maintenance of neurons. Functions in pronephros development, regulating late differentiation of all pronephric tubule segments. This Xenopus tropicalis (Western clawed frog) protein is Enoyl-[acyl-carrier-protein] reductase, mitochondrial (mecr).